Here is a 137-residue protein sequence, read N- to C-terminus: Large ribosomal subunit protein uL16 (137 aa).

It belongs to the universal ribosomal protein uL16 family. In terms of assembly, part of the 50S ribosomal subunit.

Binds 23S rRNA and is also seen to make contacts with the A and possibly P site tRNAs. The chain is Large ribosomal subunit protein uL16 from Ectopseudomonas mendocina (strain ymp) (Pseudomonas mendocina).